The primary structure comprises 528 residues: MCSLAAGNGQGAELGPEPLELSDSGDDAGWEDEDADAEPAQGRQHTPCLFCDRLFRSAEETFSHCKLEHQFNIDGMVHKHGLEFYGYIKLINFIRLKNPTVEYMNSIYNPVPWDKDEYLKPVLEDDLLLQFDVEDLYEPVSAPFTYPNGLSENTSAVEKLKLMEARALSAEAALARAREDLQKMKQFAQDFVMNVDVRTCSSTTTIADLQEDEDGVYFSSYGHYGIHEEMLKDKVRTESYRDFIYQNPHIFKDKVVLDVGCGTGILSMFAAKAGAKKVIAVDQSEILYQAMDIIRLNKLEDTIVLIKGKIEEVSLPVEKVDVIISEWMGYFLLFESMLDSVLYAKSKYLAKGGSVYPDICTISLVAVSDVSKHADRIAFWDDVYGFNMSCMKKAVIPEAVVEVVDHKTLISDPCDIKHIDCHTTSISDLEFSSDFTLRTTKTAMCTAVAGYFDIYFEKNCHNRVVFSTGPQSTKTHWKQTIFLLEKPFPVKAGEALKGKITVHKNKKDPRSLIVTLTLNSSTQTYSLQ.

The disordered stretch occupies residues 1–42; sequence MCSLAAGNGQGAELGPEPLELSDSGDDAGWEDEDADAEPAQG. C2 bears the N-acetylcysteine mark. 2 positions are modified to phosphoserine: S22 and S24. Acidic residues predominate over residues 23–37; the sequence is DSGDDAGWEDEDADA. Residues 46–69 form a C2H2-type zinc finger; sequence TPCLFCDRLFRSAEETFSHCKLEH. Position 169 is a phosphoserine (S169). A mediates interaction with ALDH1A1 region spans residues 184 to 528; it reads MKQFAQDFVM…NSSTQTYSLQ (345 aa). The region spanning 214–528 is the SAM-dependent MTase PRMT-type domain; it reads DGVYFSSYGH…NSSTQTYSLQ (315 aa). S-adenosyl-L-homocysteine-binding residues include R236, G260, D282, S284, I310, and E311. Active-site residues include E326 and E335.

Belongs to the class I-like SAM-binding methyltransferase superfamily. Protein arginine N-methyltransferase family. As to quaternary structure, monomer and homodimer. Interacts with EPB41L3 (via FERM domain); the interaction is direct and inhibits the protein-arginine N-methyltransferase activity of PRMT3. Interacts with the 40S ribosomal protein RPS2. Interacts with ALDH1A1; the interaction is direct, inhibits ALDH1A1 aldehyde dehydrogenase activity and is independent of the methyltransferase activity of PRMT3. Ubiquitously expressed.

It is found in the cytoplasm. It localises to the cytosol. The protein resides in the nucleus. The catalysed reaction is L-arginyl-[protein] + S-adenosyl-L-methionine = N(omega)-methyl-L-arginyl-[protein] + S-adenosyl-L-homocysteine + H(+). It catalyses the reaction L-arginyl-[protein] + 2 S-adenosyl-L-methionine = N(omega),N(omega)-dimethyl-L-arginyl-[protein] + 2 S-adenosyl-L-homocysteine + 2 H(+). Its activity is regulated as follows. Inhibited by N-ethylmaleimide and high concentrations of zinc chloride. Protein-arginine N-methyltransferase that catalyzes both the monomethylation and asymmetric dimethylation of the guanidino nitrogens of arginine residues in target proteins, and therefore falls into the group of type I methyltransferases. Catalyzes the asymmetric arginine dimethylation at multiple sites in the Arg/Gly-rich region of small ribosomal subunit protein uS5/RPS2. Also appears to methylate other ribosomal proteins. May regulate retinoic acid synthesis and signaling by inhibiting ALDH1A1 retinal dehydrogenase activity. Contributes to methylation of histone H4 'Arg-3', a specific tag for epigenetic transcriptional activation. Promotes osteogenesis. The polypeptide is Protein arginine N-methyltransferase 3 (Rattus norvegicus (Rat)).